We begin with the raw amino-acid sequence, 231 residues long: Sensory transduction protein BceR (231 aa).

Residues 3 to 116 (KLLLIEDDES…VLIAKIQAMF (114 aa)) enclose the Response regulatory domain. Residue Asp-52 is modified to 4-aspartylphosphate. Residues 127–225 (STIKTWCGAA…KVGQGYIAKE (99 aa)) constitute a DNA-binding region (ompR/PhoB-type).

Post-translationally, phosphorylated by BceS.

It localises to the cytoplasm. In terms of biological role, member of the two-component regulatory system BceS/BceR involved in the regulation of bacitracin resistance. When activated by BceS, binds to the upstream region of the bceAB promoter and up-regulates the expression of these two genes. The protein is Sensory transduction protein BceR (bceR) of Bacillus subtilis (strain 168).